The primary structure comprises 215 residues: MFGFLKQVGDYTRDAVDAARNLAQGFSVTFDHMQRRPVTVQYPYEKLIPSERYRGRIHYEFDKCIACEVCVRVCPINLPVVDWVMNKATKKKELRNYSIDFGVCIFCGNCVEYCPTNCLSMTEEYELAAFDRHSLNYDNVALGRLPTSVTTDPSVVPLRELAYLPAGEMDPHGVASDRPRAGQLPAQVLETLTPPAKPTAKNDGQSSSEAKEGDA.

4Fe-4S ferredoxin-type domains are found at residues 55-84 (GRIH…VDWV) and 95-124 (RNYS…MTEE). [4Fe-4S] cluster is bound by residues Cys64, Cys67, Cys70, Cys74, Cys104, Cys107, Cys110, and Cys114. A compositionally biased stretch (basic and acidic residues) spans 169-180 (MDPHGVASDRPR). Positions 169 to 215 (MDPHGVASDRPRAGQLPAQVLETLTPPAKPTAKNDGQSSSEAKEGDA) are disordered.

Belongs to the complex I 23 kDa subunit family. As to quaternary structure, NDH-1 is composed of at least 11 different subunits. [4Fe-4S] cluster is required as a cofactor.

It localises to the cellular thylakoid membrane. It carries out the reaction a plastoquinone + NADH + (n+1) H(+)(in) = a plastoquinol + NAD(+) + n H(+)(out). The catalysed reaction is a plastoquinone + NADPH + (n+1) H(+)(in) = a plastoquinol + NADP(+) + n H(+)(out). NDH-1 shuttles electrons from an unknown electron donor, via FMN and iron-sulfur (Fe-S) centers, to quinones in the respiratory and/or the photosynthetic chain. The immediate electron acceptor for the enzyme in this species is believed to be plastoquinone. Couples the redox reaction to proton translocation, and thus conserves the redox energy in a proton gradient. The protein is NAD(P)H-quinone oxidoreductase subunit I of Synechococcus sp. (strain CC9605).